The sequence spans 129 residues: UPF0102 protein Cpar_0015 (129 aa).

This sequence belongs to the UPF0102 family.

This is UPF0102 protein Cpar_0015 from Chlorobaculum parvum (strain DSM 263 / NCIMB 8327) (Chlorobium vibrioforme subsp. thiosulfatophilum).